A 202-amino-acid polypeptide reads, in one-letter code: UPF0637 protein Exig_2520 (202 aa).

Belongs to the UPF0637 family.

The chain is UPF0637 protein Exig_2520 from Exiguobacterium sibiricum (strain DSM 17290 / CCUG 55495 / CIP 109462 / JCM 13490 / 255-15).